The sequence spans 330 residues: 2-methoxy-6-polyprenyl-1,4-benzoquinol methylase, mitochondrial (330 aa).

Residues 1 to 42 (MAAPRSWALWSFCGCGWSRAVSGCRLPGLRSSSPRGPLGARL) constitute a mitochondrion transit peptide. S-adenosyl-L-methionine-binding positions include threonine 117, aspartate 171, and 199–200 (DA).

Belongs to the class I-like SAM-binding methyltransferase superfamily. MenG/UbiE family. In terms of assembly, component of a multi-subunit COQ enzyme complex, composed of at least COQ3, COQ4, COQ5, COQ6, COQ7 and COQ9. Interacts with PYURF; the interaction is direct, stabilizes COQ5 protein and associates PYURF with COQ enzyme complex.

It is found in the mitochondrion inner membrane. The enzyme catalyses 2-methoxy-6-(all-trans-decaprenyl)benzene-1,4-diol + S-adenosyl-L-methionine = 5-methoxy-2-methyl-3-(all-trans-decaprenyl)benzene-1,4-diol + S-adenosyl-L-homocysteine + H(+). The protein operates within cofactor biosynthesis; ubiquinone biosynthesis. Methyltransferase required for the conversion of 2-decaprenyl-6-methoxy-1,4-benzoquinol (DDMQH2) to 2-decaprenyl-3-methyl-6-methoxy-1,4-benzoquinol (DMQH2). The sequence is that of 2-methoxy-6-polyprenyl-1,4-benzoquinol methylase, mitochondrial from Bos taurus (Bovine).